A 937-amino-acid polypeptide reads, in one-letter code: Alanine--tRNA ligase (937 aa).

Zn(2+) is bound by residues His626, His630, Cys727, and His731.

Belongs to the class-II aminoacyl-tRNA synthetase family. Zn(2+) is required as a cofactor.

It localises to the cytoplasm. The enzyme catalyses tRNA(Ala) + L-alanine + ATP = L-alanyl-tRNA(Ala) + AMP + diphosphate. Functionally, catalyzes the attachment of alanine to tRNA(Ala) in a two-step reaction: alanine is first activated by ATP to form Ala-AMP and then transferred to the acceptor end of tRNA(Ala). Also edits incorrectly charged Ser-tRNA(Ala) and Gly-tRNA(Ala) via its editing domain. This chain is Alanine--tRNA ligase, found in Opitutus terrae (strain DSM 11246 / JCM 15787 / PB90-1).